Reading from the N-terminus, the 397-residue chain is uncharacterized protein (397 aa).

The next 4 membrane-spanning stretches (helical) occupy residues 62–79 (VLLF…LIAI), 92–109 (WYGL…LVVT), 135–154 (VVFL…STLS), and 167–189 (AFLK…FPGI).

The protein resides in the cell membrane. This is an uncharacterized protein from Archaeoglobus fulgidus (strain ATCC 49558 / DSM 4304 / JCM 9628 / NBRC 100126 / VC-16).